The primary structure comprises 337 residues: Putative 2-aminoethylphosphonate-binding periplasmic protein (337 aa).

An N-terminal signal peptide occupies residues 1-21; it reads MKLSRLALLSVFALASAPSWA.

The protein belongs to the bacterial solute-binding protein 1 family.

The protein localises to the periplasm. Probably part of the PhnSTUV complex (TC 3.A.1.11.5) involved in 2-aminoethylphosphonate import. This chain is Putative 2-aminoethylphosphonate-binding periplasmic protein (phnS), found in Salmonella typhimurium (strain LT2 / SGSC1412 / ATCC 700720).